A 175-amino-acid polypeptide reads, in one-letter code: Cytochrome c-550-like protein (175 aa).

The first 34 residues, 1-34 (MYQPHFWQRSIGWLCGGLLILLLGWTIAPATALA), serve as a signal peptide directing secretion. 4 residues coordinate heme c: Cys-81, Cys-84, His-85, and Cys-135.

The protein belongs to the cytochrome c family. PsbV subfamily. It depends on heme c as a cofactor.

It localises to the cellular thylakoid membrane. Probable low-potential cytochrome c, can partially replace cytochrome c-550 (PsbV) function. The polypeptide is Cytochrome c-550-like protein (Thermosynechococcus vestitus (strain NIES-2133 / IAM M-273 / BP-1)).